Consider the following 290-residue polypeptide: Ribosomal RNA small subunit methyltransferase A (290 aa).

Positions 27, 29, 54, 75, 100, and 125 each coordinate S-adenosyl-L-methionine.

This sequence belongs to the class I-like SAM-binding methyltransferase superfamily. rRNA adenine N(6)-methyltransferase family. RsmA subfamily.

The protein resides in the cytoplasm. The enzyme catalyses adenosine(1518)/adenosine(1519) in 16S rRNA + 4 S-adenosyl-L-methionine = N(6)-dimethyladenosine(1518)/N(6)-dimethyladenosine(1519) in 16S rRNA + 4 S-adenosyl-L-homocysteine + 4 H(+). In terms of biological role, specifically dimethylates two adjacent adenosines (A1518 and A1519) in the loop of a conserved hairpin near the 3'-end of 16S rRNA in the 30S particle. May play a critical role in biogenesis of 30S subunits. The chain is Ribosomal RNA small subunit methyltransferase A from Streptococcus agalactiae serotype Ia (strain ATCC 27591 / A909 / CDC SS700).